A 413-amino-acid chain; its full sequence is Serine hydroxymethyltransferase (413 aa).

(6S)-5,6,7,8-tetrahydrofolate-binding positions include Leu117 and 121 to 123; that span reads GHL. Lys226 is subject to N6-(pyridoxal phosphate)lysine. (6S)-5,6,7,8-tetrahydrofolate is bound by residues Glu239 and 349 to 351; that span reads SPF.

The protein belongs to the SHMT family. Homodimer. Requires pyridoxal 5'-phosphate as cofactor.

Its subcellular location is the cytoplasm. The enzyme catalyses (6R)-5,10-methylene-5,6,7,8-tetrahydrofolate + glycine + H2O = (6S)-5,6,7,8-tetrahydrofolate + L-serine. Its pathway is one-carbon metabolism; tetrahydrofolate interconversion. It participates in amino-acid biosynthesis; glycine biosynthesis; glycine from L-serine: step 1/1. Its function is as follows. Catalyzes the reversible interconversion of serine and glycine with tetrahydrofolate (THF) serving as the one-carbon carrier. This reaction serves as the major source of one-carbon groups required for the biosynthesis of purines, thymidylate, methionine, and other important biomolecules. Also exhibits THF-independent aldolase activity toward beta-hydroxyamino acids, producing glycine and aldehydes, via a retro-aldol mechanism. This chain is Serine hydroxymethyltransferase, found in Bacillus cereus (strain AH187).